The chain runs to 346 residues: GTPase Obg (346 aa).

The Obg domain maps to 1-159 (MKFLDSAKIY…RTVLLRLKLI (159 aa)). The OBG-type G domain maps to 160–327 (ADAGLVGLPN…ALRAVLAEID (168 aa)). GTP contacts are provided by residues 166-173 (GLPNAGKS), 191-195 (FTTLN), 212-215 (DIPG), 279-282 (SKVD), and 308-310 (SAA). Residues Ser-173 and Thr-193 each coordinate Mg(2+).

Belongs to the TRAFAC class OBG-HflX-like GTPase superfamily. OBG GTPase family. As to quaternary structure, monomer. Mg(2+) is required as a cofactor.

The protein localises to the cytoplasm. An essential GTPase which binds GTP, GDP and possibly (p)ppGpp with moderate affinity, with high nucleotide exchange rates and a fairly low GTP hydrolysis rate. Plays a role in control of the cell cycle, stress response, ribosome biogenesis and in those bacteria that undergo differentiation, in morphogenesis control. The sequence is that of GTPase Obg from Methylocella silvestris (strain DSM 15510 / CIP 108128 / LMG 27833 / NCIMB 13906 / BL2).